Reading from the N-terminus, the 129-residue chain is Cytochrome c oxidase subunit 5B, mitochondrial (129 aa).

A mitochondrion-targeting transit peptide spans 1–31 (MASRLLRGVGALAAQALRAHGPRGVAATRSM). Lys-68 and Lys-86 each carry N6-acetyllysine. The Zn(2+) site is built by Cys-91, Cys-93, Cys-113, and Cys-116. Lys-121 is subject to N6-acetyllysine.

The protein belongs to the cytochrome c oxidase subunit 5B family. As to quaternary structure, component of the cytochrome c oxidase (complex IV, CIV), a multisubunit enzyme composed of 14 subunits. The complex is composed of a catalytic core of 3 subunits MT-CO1, MT-CO2 and MT-CO3, encoded in the mitochondrial DNA, and 11 supernumerary subunits COX4I, COX5A, COX5B, COX6A, COX6B, COX6C, COX7A, COX7B, COX7C, COX8 and NDUFA4, which are encoded in the nuclear genome. The complex exists as a monomer or a dimer and forms supercomplexes (SCs) in the inner mitochondrial membrane with NADH-ubiquinone oxidoreductase (complex I, CI) and ubiquinol-cytochrome c oxidoreductase (cytochrome b-c1 complex, complex III, CIII), resulting in different assemblies (supercomplex SCI(1)III(2)IV(1) and megacomplex MCI(2)III(2)IV(2)).

The protein resides in the mitochondrion inner membrane. The protein operates within energy metabolism; oxidative phosphorylation. In terms of biological role, component of the cytochrome c oxidase, the last enzyme in the mitochondrial electron transport chain which drives oxidative phosphorylation. The respiratory chain contains 3 multisubunit complexes succinate dehydrogenase (complex II, CII), ubiquinol-cytochrome c oxidoreductase (cytochrome b-c1 complex, complex III, CIII) and cytochrome c oxidase (complex IV, CIV), that cooperate to transfer electrons derived from NADH and succinate to molecular oxygen, creating an electrochemical gradient over the inner membrane that drives transmembrane transport and the ATP synthase. Cytochrome c oxidase is the component of the respiratory chain that catalyzes the reduction of oxygen to water. Electrons originating from reduced cytochrome c in the intermembrane space (IMS) are transferred via the dinuclear copper A center (CU(A)) of subunit 2 and heme A of subunit 1 to the active site in subunit 1, a binuclear center (BNC) formed by heme A3 and copper B (CU(B)). The BNC reduces molecular oxygen to 2 water molecules using 4 electrons from cytochrome c in the IMS and 4 protons from the mitochondrial matrix. This chain is Cytochrome c oxidase subunit 5B, mitochondrial (Cox5b), found in Rattus norvegicus (Rat).